Reading from the N-terminus, the 377-residue chain is Succinyl-diaminopimelate desuccinylase (377 aa).

Zn(2+) is bound at residue histidine 68. Residue aspartate 70 is part of the active site. Aspartate 101 contacts Zn(2+). Residue glutamate 135 is the Proton acceptor of the active site. Zn(2+)-binding residues include glutamate 136, glutamate 164, and histidine 350.

It belongs to the peptidase M20A family. DapE subfamily. In terms of assembly, homodimer. Requires Zn(2+) as cofactor. The cofactor is Co(2+).

The enzyme catalyses N-succinyl-(2S,6S)-2,6-diaminopimelate + H2O = (2S,6S)-2,6-diaminopimelate + succinate. Its pathway is amino-acid biosynthesis; L-lysine biosynthesis via DAP pathway; LL-2,6-diaminopimelate from (S)-tetrahydrodipicolinate (succinylase route): step 3/3. Functionally, catalyzes the hydrolysis of N-succinyl-L,L-diaminopimelic acid (SDAP), forming succinate and LL-2,6-diaminopimelate (DAP), an intermediate involved in the bacterial biosynthesis of lysine and meso-diaminopimelic acid, an essential component of bacterial cell walls. The sequence is that of Succinyl-diaminopimelate desuccinylase from Vibrio vulnificus (strain CMCP6).